The primary structure comprises 255 residues: tRNA (guanine-N(7)-)-methyltransferase (255 aa).

The disordered stretch occupies residues 1–35; that stretch reads MTRTNDASGGGKLPRKRFYRARAHSNPLSDSHFPV. Basic residues predominate over residues 13-23; it reads LPRKRFYRARA. Residues Gly-75, 98–99, 131–132, and Leu-151 each bind S-adenosyl-L-methionine; these read EL and NS. Asp-154 is a catalytic residue. 229 to 231 contributes to the S-adenosyl-L-methionine binding site; that stretch reads TEE.

This sequence belongs to the class I-like SAM-binding methyltransferase superfamily. TrmB family.

It localises to the nucleus. It catalyses the reaction guanosine(46) in tRNA + S-adenosyl-L-methionine = N(7)-methylguanosine(46) in tRNA + S-adenosyl-L-homocysteine. It participates in tRNA modification; N(7)-methylguanine-tRNA biosynthesis. Catalyzes the formation of N(7)-methylguanine at position 46 (m7G46) in tRNA. This is tRNA (guanine-N(7)-)-methyltransferase from Zea mays (Maize).